Consider the following 359-residue polypeptide: Flavonoid 8-O-methyltransferase 1 (359 aa).

Residue D223 coordinates S-adenosyl-L-methionine. The active-site Proton acceptor is the H261.

Belongs to the class I-like SAM-binding methyltransferase superfamily. Cation-independent O-methyltransferase family. As to expression, expressed in leaves and trichomes, especially in cv. SD and cv. EMX-1, but barely in cv. MC and cv. SW.

The enzyme catalyses an 8-hydroxyflavone + S-adenosyl-L-methionine = an 8-methoxyflavone + S-adenosyl-L-homocysteine + H(+). It carries out the reaction 4',7,8-trihydroxyflavone + S-adenosyl-L-methionine = 4',7-dihydroxy-8-methoxyflavone + S-adenosyl-L-homocysteine + H(+). It catalyses the reaction 7,8-dihydroxyflavone + S-adenosyl-L-methionine = 7-hydroxy-8-methoxyflavone + S-adenosyl-L-homocysteine + H(+). The catalysed reaction is 3',4',7,8-tetrahydroxyflavone + S-adenosyl-L-methionine = 3',4,7-trihydroxy-8-methoxyflavone + S-adenosyl-L-homocysteine + H(+). Its pathway is flavonoid metabolism. Its activity is regulated as follows. Strongly inhibited by gardenin B (GARD B). Cation-independent flavonoid 8-O-methyltransferase involved in the biosynthesis of polymethoxylated flavonoids natural products such as nevadensin and salvigenin, aroma compounds which contribute to the flavor of sweet basil, and exhibit pharmacological activities such as anti-allergic, anti-oxidant, antibacterial, anti-proliferative, and anti-inflammatory effects. Catalyzes S-adenosylmethionine-dependent regioselective 8-O-methylation of flavonoids; mediates likely the conversion of pilosin (PIL) to nevadensin (NEV) and of 8-hydroxysalvigenin (8-OH-SALV) to gardenin B (GARD B). Can also use 3',4',7,8-tetrahydroxyflavone as substrate. Accepts other unnatural O-diphenols including 7,8,4'-trihydroxy-flavone and 7-O-methyl-8-hydroxy-flavone, and, with a lower efficiency, 7,8-dihydroxy-flavone, as substrates. This is Flavonoid 8-O-methyltransferase 1 from Ocimum basilicum (Sweet basil).